The following is a 551-amino-acid chain: Palmdelphin (551 aa).

Position 1 is an N-acetylmethionine (M1). The stretch at 12–106 forms a coiled coil; it reads QAITDKRKIQ…LQISANEEVI (95 aa). K125 participates in a covalent cross-link: Glycyl lysine isopeptide (Lys-Gly) (interchain with G-Cter in SUMO2). 2 positions are modified to phosphoserine: S135 and S163. K178 is covalently cross-linked (Glycyl lysine isopeptide (Lys-Gly) (interchain with G-Cter in SUMO1); alternate). A Glycyl lysine isopeptide (Lys-Gly) (interchain with G-Cter in SUMO2); alternate cross-link involves residue K178. A compositionally biased stretch (basic and acidic residues) spans 247–258; the sequence is ERNSKSPTEYHE. Positions 247-267 are disordered; that stretch reads ERNSKSPTEYHEPVYANPFCR. Position 270 is a phosphothreonine (T270). Disordered stretches follow at residues 298 to 387 and 452 to 536; these read HESE…CSSP and EDDE…DPSL. Residues S322, S350, S371, S376, S385, and S386 each carry the phosphoserine modification. Residues 484 to 495 are compositionally biased toward basic and acidic residues; that stretch reads KRSEVSPHENTN. Residues S498, S515, and S520 each carry the phosphoserine modification.

Belongs to the paralemmin family. Interacts with GLUL. Post-translationally, phosphorylated. Expressed in the brain and the spinal cord. Expressed in the anterior olfactory nucleus, the olfactory tubercle, the nucleus supraopticus, the nucleus of the lateral olfactory tract, the piriform cortex, the cortico-amygdaloid transition zone, the septofimbrial nucleus and the indusium griseum (at protein level).

The protein localises to the cytoplasm. Its subcellular location is the cell projection. The protein resides in the dendrite. It localises to the dendritic spine. The chain is Palmdelphin (Palmd) from Rattus norvegicus (Rat).